A 594-amino-acid polypeptide reads, in one-letter code: Putative aldehyde oxidase Art an 7 (594 aa).

An N-terminal signal peptide occupies residues M1 to A23. The interval T28–D56 is disordered.

The N-terminus is blocked. Post-translationally, glycosylated. In terms of tissue distribution, expressed in pollen (at protein level).

It localises to the cytoplasm. It catalyses the reaction an aldehyde + O2 + H2O = a carboxylate + H2O2 + H(+). Functionally, catalyzes the oxidation of aldehydes to the corresponding carboxylate by coupling the reaction to the reduction of dioxygen to hydrogen peroxide. Substrates include glyoxal and other aldehydes. Does not have enzymatic activity on D-galactose. The chain is Putative aldehyde oxidase Art an 7 from Artemisia annua (Sweet wormwood).